The chain runs to 136 residues: Large ribosomal subunit protein uL16 (136 aa).

The protein belongs to the universal ribosomal protein uL16 family. As to quaternary structure, part of the 50S ribosomal subunit.

Binds 23S rRNA and is also seen to make contacts with the A and possibly P site tRNAs. This is Large ribosomal subunit protein uL16 from Vesicomyosocius okutanii subsp. Calyptogena okutanii (strain HA).